The chain runs to 97 residues: UPF0235 protein AZOSEA09540 (97 aa).

It belongs to the UPF0235 family.

The chain is UPF0235 protein AZOSEA09540 from Aromatoleum aromaticum (strain DSM 19018 / LMG 30748 / EbN1) (Azoarcus sp. (strain EbN1)).